We begin with the raw amino-acid sequence, 172 residues long: Co-chaperone protein HscB (172 aa).

In terms of domain architecture, J spans 2 to 74 (DYFTLFGLPI…LKRAEYMLSL (73 aa)).

Belongs to the HscB family. Interacts with HscA and stimulates its ATPase activity. Interacts with IscU.

Co-chaperone involved in the maturation of iron-sulfur cluster-containing proteins. Seems to help targeting proteins to be folded toward HscA. The chain is Co-chaperone protein HscB from Pectobacterium atrosepticum (strain SCRI 1043 / ATCC BAA-672) (Erwinia carotovora subsp. atroseptica).